The primary structure comprises 71 residues: Large ribosomal subunit protein bL31 (71 aa).

The Zn(2+) site is built by Cys-16, Cys-18, Cys-37, and Cys-40.

It belongs to the bacterial ribosomal protein bL31 family. Type A subfamily. As to quaternary structure, part of the 50S ribosomal subunit. Zn(2+) serves as cofactor.

Functionally, binds the 23S rRNA. The chain is Large ribosomal subunit protein bL31 from Pseudoalteromonas translucida (strain TAC 125).